We begin with the raw amino-acid sequence, 91 residues long: Early E3B 10.4 kDa protein (91 aa).

A signal peptide spans 1-22 (MIPRVFILLTLVALFCACSTLA). At 23–34 (AVSHIEVDCIPA) the chain is on the lumenal side. The helical transmembrane segment at 35–60 (FTVYLLYGFVTLTLICSLITVVIAFI) threads the bilayer. Residues 61–91 (QCIDWVCVRFAYLRHHPQYRDRTIAELLRIL) lie on the Cytoplasmic side of the membrane.

This sequence belongs to the adenoviridae E3B family.

The protein localises to the host endoplasmic reticulum membrane. In terms of biological role, down-regulates the EGF receptor. The polypeptide is Early E3B 10.4 kDa protein (Homo sapiens (Human)).